We begin with the raw amino-acid sequence, 113 residues long: Large ribosomal subunit protein P1z (113 aa).

Positions 87-113 are disordered; the sequence is AAAPAKEEKKDEPAEESDGDLGFGLFD. Ser-103 carries the post-translational modification Phosphoserine.

The protein belongs to the eukaryotic ribosomal protein P1/P2 family. P1 and P2 exist as dimers at the large ribosomal subunit.

Functionally, plays an important role in the elongation step of protein synthesis. The chain is Large ribosomal subunit protein P1z (RPP1B) from Arabidopsis thaliana (Mouse-ear cress).